We begin with the raw amino-acid sequence, 383 residues long: Succinyl-diaminopimelate desuccinylase (383 aa).

His-79 provides a ligand contact to Zn(2+). Asp-81 is a catalytic residue. Asp-110 contacts Zn(2+). The active-site Proton acceptor is Glu-141. Residues Glu-142, Glu-170, and His-355 each contribute to the Zn(2+) site.

It belongs to the peptidase M20A family. DapE subfamily. In terms of assembly, homodimer. It depends on Zn(2+) as a cofactor. Co(2+) is required as a cofactor.

The catalysed reaction is N-succinyl-(2S,6S)-2,6-diaminopimelate + H2O = (2S,6S)-2,6-diaminopimelate + succinate. It functions in the pathway amino-acid biosynthesis; L-lysine biosynthesis via DAP pathway; LL-2,6-diaminopimelate from (S)-tetrahydrodipicolinate (succinylase route): step 3/3. In terms of biological role, catalyzes the hydrolysis of N-succinyl-L,L-diaminopimelic acid (SDAP), forming succinate and LL-2,6-diaminopimelate (DAP), an intermediate involved in the bacterial biosynthesis of lysine and meso-diaminopimelic acid, an essential component of bacterial cell walls. The polypeptide is Succinyl-diaminopimelate desuccinylase (Helicobacter pylori (strain ATCC 700392 / 26695) (Campylobacter pylori)).